The following is a 235-amino-acid chain: Ubiquinone biosynthesis O-methyltransferase (235 aa).

S-adenosyl-L-methionine is bound by residues R39, G59, D80, and M124.

The protein belongs to the methyltransferase superfamily. UbiG/COQ3 family.

The catalysed reaction is a 3-demethylubiquinol + S-adenosyl-L-methionine = a ubiquinol + S-adenosyl-L-homocysteine + H(+). It catalyses the reaction a 3-(all-trans-polyprenyl)benzene-1,2-diol + S-adenosyl-L-methionine = a 2-methoxy-6-(all-trans-polyprenyl)phenol + S-adenosyl-L-homocysteine + H(+). It participates in cofactor biosynthesis; ubiquinone biosynthesis. Its function is as follows. O-methyltransferase that catalyzes the 2 O-methylation steps in the ubiquinone biosynthetic pathway. The sequence is that of Ubiquinone biosynthesis O-methyltransferase from Photobacterium profundum (strain SS9).